Consider the following 430-residue polypeptide: Enolase (430 aa).

Residue glutamine 163 coordinates (2R)-2-phosphoglycerate. Residue glutamate 205 is the Proton donor of the active site. Residues aspartate 242, glutamate 285, and aspartate 312 each contribute to the Mg(2+) site. The (2R)-2-phosphoglycerate site is built by lysine 337, arginine 366, serine 367, and lysine 388. The Proton acceptor role is filled by lysine 337.

Belongs to the enolase family. Mg(2+) is required as a cofactor.

The protein resides in the cytoplasm. It is found in the secreted. Its subcellular location is the cell surface. It catalyses the reaction (2R)-2-phosphoglycerate = phosphoenolpyruvate + H2O. It participates in carbohydrate degradation; glycolysis; pyruvate from D-glyceraldehyde 3-phosphate: step 4/5. In terms of biological role, catalyzes the reversible conversion of 2-phosphoglycerate (2-PG) into phosphoenolpyruvate (PEP). It is essential for the degradation of carbohydrates via glycolysis. The chain is Enolase from Rubrobacter xylanophilus (strain DSM 9941 / JCM 11954 / NBRC 16129 / PRD-1).